We begin with the raw amino-acid sequence, 952 residues long: MLRRPAPALARAVRLLLAGLLYGGGVWAARVNKHKPWLEPTYHGIVTENDNTVLLDPPLIALDKDSPLRFAGEICGFKIHGQNVPFDAVVVDKSTGEGIIRSKEKLDCELQKDYTFTIQAYDCGKGPDGTGVKKSHKATVHIQVNDVNEYAPVFKEKSYKAAVVEGKQHGSILRVEAVDADCSPQFSQICSYEILTPDVPFTVDKDGYIKNTEKLNYGKEHQYKLTVTAYDCGKKRATEDVLVKISVKPTCSPGWQGWSSRIEYEPGTGALAVFPSIHLETCDEPVASVQATVELETSHIGKGCDRDTYSEKSLHRLCGAAAGTSELLPSPSSSFNWTVGLPTDNGHDSDQVFEFNGTQAVRIPDGVVTLDPKEPFTISVWMRHGPFGRKKETILCSSDKTDMNRHHYSLYVHGCRLIFLLRQDPSEEKKYRPAEFHWKLNQVCDEDWHHFVLNVEVPSVTLYVDGVSHEPFSVTEDYPLHPTKIETQLVVGACWQGGDLHMTQFFRGNLAGLTVRSGKLADKKVIDCLYTCKEGLDLQVPEDGNRGVQIQTSSSQAVLTLEGENVGELDKAMQHISYLNSRQFPTPGIRRLKITSTVKCFNEAACIEVPPVEGYVMVLQPEEPKISLSGVHHFARAASEFESPEGVSLFPELKIISTITREVEPEADGAEDPTVQESLVSEEIVHDLDTCEVTVEGEELNAEQESLEVDVARLQQKGIEVNHSDLGVVFTGVETMASYEEVLHLLRYRNWHTRSLLDRKFKLICSELNGRYLSNEFKVEVNVIHTANPVEHANHMAAQPQFVHPEHRSFVDLSGHNLASPHPFAVVPSTATVVIVVCVSFLVFMIILGVFRIRAAHQRTMRDQDTGKENEMDWDDSALTITVNPMETYEDQHSSEEEEEEEEEEESEDGEEEEDITSAESESSEEEEGGPGDGQNTTRQQQLEWDYSTLSY.

Positions methionine 1–alanine 28 are cleaved as a signal peptide. The Extracellular portion of the chain corresponds to alanine 29 to threonine 830. Cadherin domains are found at residues leucine 38–phenylalanine 154 and lysine 155–tryptophan 255. N-linked (GlcNAc...) asparagine glycosylation occurs at asparagine 356. Residues alanine 831–phenylalanine 851 form a helical membrane-spanning segment. Topologically, residues arginine 852–tyrosine 952 are cytoplasmic. Residues methionine 886–tyrosine 952 form a disordered region. Acidic residues predominate over residues glutamate 896 to glycine 930. A compositionally biased stretch (polar residues) spans glycine 934–tyrosine 952.

It belongs to the calsyntenin family. In terms of assembly, directly interacts with APBA2. Forms a tripartite complex with APBA2 and APP. Interacts with KLC1. As to quaternary structure, interacts with APBB1; this interaction stabilizes AlcICD metabolism. Interacts with PSEN1. Proteolytically processed under normal cellular conditions. A primary zeta-cleavage generates a large extracellular (soluble) N-terminal domain (sAlc) and a short C-terminal transmembrane fragment (CTF1). A secondary cleavage catalyzed by presenilin gamma-secretase within the transmembrane domain releases the beta-Alc-alpha chain in the extracellular milieu and produces an intracellular fragment (AlcICD). This processing is strongly suppressed in the tripartite complex formed with APBA2 and APP, which seems to prevent the association with PSEN1. As to expression, preferentially expressed in the retina and brain.

It is found in the postsynaptic cell membrane. Its subcellular location is the endoplasmic reticulum membrane. The protein localises to the golgi apparatus membrane. It localises to the cell projection. The protein resides in the neuron projection. It is found in the nucleus. Postsynaptic adhesion molecule that binds to presynaptic neurexins to mediate both excitatory and inhibitory synapse formation. Promotes synapse development by acting as a cell adhesion molecule at the postsynaptic membrane, which associates with neurexin-alpha at the presynaptic membrane. Also functions as a cargo in axonal anterograde transport by acting as a molecular adapter that promotes KLC1 association with vesicles. Complex formation with APBA2 and APP, stabilizes APP metabolism and enhances APBA2-mediated suppression of beta-APP40 secretion, due to the retardation of intracellular APP maturation. Functionally, as intracellular fragment AlcICD, suppresses APBB1-dependent transactivation stimulated by APP C-terminal intracellular fragment (AICD), most probably by competing with AICD for APBB1-binding. Its function is as follows. In complex with APBA2 and C99, a C-terminal APP fragment, abolishes C99 interaction with PSEN1 and thus APP C99 cleavage by gamma-secretase, most probably through stabilization of the direct interaction between APBA2 and APP. This Rattus norvegicus (Rat) protein is Calsyntenin-1 (Clstn1).